Reading from the N-terminus, the 579-residue chain is Tyrosine 3-monooxygenase (579 aa).

Over residues 105 to 114 (VEFESVEQEQ) the composition is skewed to acidic residues. The segment at 105-132 (VEFESVEQEQSESQSQEPEGNQQPTKND) is disordered. Residues histidine 409, histidine 414, and glutamate 454 each contribute to the Fe cation site.

Belongs to the biopterin-dependent aromatic amino acid hydroxylase family. It depends on Fe(2+) as a cofactor.

The protein localises to the cytoplasm. Its subcellular location is the perinuclear region. The protein resides in the cell projection. It is found in the axon. The catalysed reaction is (6R)-L-erythro-5,6,7,8-tetrahydrobiopterin + L-tyrosine + O2 = (4aS,6R)-4a-hydroxy-L-erythro-5,6,7,8-tetrahydrobiopterin + L-dopa. Its pathway is catecholamine biosynthesis; dopamine biosynthesis; dopamine from L-tyrosine: step 1/2. Phosphorylation leads to an increase in the catalytic activity. In terms of biological role, plays an important role in the physiology of adrenergic neurons. This chain is Tyrosine 3-monooxygenase (ple), found in Drosophila melanogaster (Fruit fly).